We begin with the raw amino-acid sequence, 2325 residues long: Protein sidekick homolog (2325 aa).

An N-terminal signal peptide occupies residues 1–26; the sequence is MRNRLLLIFYTTTVLWTIGYTQLVLG. Residues 27 to 2019 are Extracellular-facing; that stretch reads KPPIFQDGGS…IPDDPFYTTW (1993 aa). 3 Ig-like C2-type domains span residues 28 to 105, 217 to 319, and 324 to 397; these read PPIF…AAIS, PSLQ…AYMT, and PILK…ADLA. 3 cysteine pairs are disulfide-bonded: Cys52–Cys94, Cys247–Cys301, and Cys345–Cys386. N-linked (GlcNAc...) asparagine glycosylation is present at Asn407. 2 consecutive Ig-like C2-type domains span residues 456-544 and 547-638; these read PSQK…VQVN and SLIE…AMLQ. 2 disulfide bridges follow: Cys480/Cys528 and Cys568/Cys622. Asn632, Asn655, Asn807, Asn868, Asn932, and Asn1016 each carry an N-linked (GlcNAc...) asparagine glycan. 13 Fibronectin type-III domains span residues 645–751, 756–853, 858–957, 961–1055, 1059–1154, 1159–1254, 1259–1359, 1363–1457, 1463–1566, 1571–1671, 1673–1775, 1776–1872, and 1873–2004; these read MPER…MPQQ, APRN…TSEG, APKN…TEED, SVDE…VPPE, RPSM…TLQT, PSQR…TYES, SPRN…TMED, PPES…SSVR, APAP…TLPS, QPIS…VGYS, PKRN…DKPG, PVGI…SKDG, and PPPP…TEQL. The tract at residues 1036–1059 is disordered; it reads TRKGDGPVEETKFESGVPPELPGR. The segment covering 1037–1048 has biased composition (basic and acidic residues); it reads RKGDGPVEETKF. Asn1107 is a glycosylation site (N-linked (GlcNAc...) asparagine). The tract at residues 1137 to 1161 is disordered; sequence KGRGAPSEPSRSFETLQTNPDTPSQ. A compositionally biased stretch (polar residues) spans 1145–1161; the sequence is PSRSFETLQTNPDTPSQ. Residue Asn1614 is glycosylated (N-linked (GlcNAc...) asparagine). Disordered regions lie at residues 1857–1884 and 1918–1947; these read GEQRSANVTIGPSKDGPPPPSKPQITSG and PANGYVSQRPRRNEIKGAKSAAQTAAATST. Asn1863 carries an N-linked (GlcNAc...) asparagine glycan. Over residues 1935-1947 the composition is skewed to low complexity; it reads AKSAAQTAAATST. A helical transmembrane segment spans residues 2020–2040; the sequence is WFMALVAMGAFVLIVIIIAIL. At 2041–2325 the chain is on the cytoplasmic side; sequence CVTGSSAKYR…NLTTGFSSFV (285 aa). 4 disordered regions span residues 2080–2113, 2164–2187, 2202–2226, and 2285–2325; these read NMTRSRELPTRPGTTQSWVSDQSREPPAYGSVLG, TAYVTPSARGGSDNGRNEYMPTRS, RGHIPSSSGGSGAGSQPQGSPLQQP, and ILTG…SSFV. The segment covering 2091–2100 has biased composition (polar residues); the sequence is PGTTQSWVSD. Over residues 2215-2226 the composition is skewed to low complexity; that stretch reads GSQPQGSPLQQP. Composition is skewed to polar residues over residues 2294–2305 and 2313–2325; these read AGRSSTTDSTSE and ATPNLTTGFSSFV.

Belongs to the sidekick family.

Its subcellular location is the membrane. Cell adhesion protein. In Caenorhabditis elegans, this protein is Protein sidekick homolog (rig-4).